Here is a 1169-residue protein sequence, read N- to C-terminus: Rabankyrin-5 (1169 aa).

Alanine 2 carries the N-acetylalanine modification. The BTB domain occupies 68–130 (SDLKIKVGDR…IYTDELEFRE (63 aa)). ANK repeat units lie at residues 217-247 (KTEYPLHKAIKVEREDVVFLYLIEMDSQLPG), 255-284 (NGDLALDLALSRRLESIATTLVSHKADVDM), 288-317 (SGWSLLHKGIQRGDLFAATFLIKNGAFVNA), 322-362 (AQET…NPNM), and 366-396 (KGRTPLHVSIMAGNEYVFSQLLQCKQLDLEL). Serine 270 is modified (phosphoserine). An NPF motif is present at residues 421–423 (NPF). ANK repeat units follow at residues 490–519 (WGETPLHTACRHGLANLTAELLQQGANPNL), 542–572 (HLQTPLHMAIAYNHPDVVSVILEQKANALHA), 588–617 (RDQTVLGLALWTGMHTIAAQLLGSGAAIND), 621–650 (DGQTLLHMAIQRQDSKSALFLLEHQADINV), 654–683 (DGETALQLAIRNQLPLVVDAICTRGADMSV), 687–716 (KGNPPLWLALANNLEDIASTLVRHGCDATC), 724–753 (CLQTLLHRAIDENNEPTACFLIRSGCDVNS), 769–798 (DGQTPLHLAASWGLEETVQCLLEFGANVNA), 802–832 (EGRTPIHVAISSQHGVIIQLLVSHPDIHLNV), 836–865 (QGLTPFACAMTFKNNKSAEAILKRESGAAE), 870–899 (KGRNFLHVAVQNSDIESVLFLISVHANVNS), 905–934 (SKLTPLHLAVQAGSEIIVRNLLLAGAKVNE), 938–967 (HRQTALHLAAQQDLPTICSVLLENGVDFAA), 971–1001 (NGNNALHLAVMHGRLNNIRVLLTECTVDAEA), 1005–1037 (RGQSPLHILGQYGKENAAAIFDLFLECMPGYPL), and 1043–1072 (DGSTVLLLAYMKGNANLCRAIVRSGARLGV). Positions 650 to 759 (VRTQDGETAL…DVNSPRQPGA (110 aa)) are interaction with RHOD and RAB5A. The FYVE-type zinc finger occupies 1104 to 1164 (WCDGSYCYEC…VCNICFDVLT (61 aa)). 8 residues coordinate Zn(2+): cysteine 1110, cysteine 1113, cysteine 1126, cysteine 1129, cysteine 1134, cysteine 1137, cysteine 1156, and cysteine 1159.

As to quaternary structure, interacts with RAB5A (in GTP-bound form). Interacts with RHOD (independent of GTP-loaded status). Interacts with EHD1. Interacts with VPS26A; the interaction is independent of EHD1 and is indicative for an association with the cargo recognition subcomplex of the retromer complex. High expression in whole adult brain and intermediate expression in all other tissues and specific brain regions examined, including fetal brain.

The protein resides in the cytoplasm. It is found in the endosome membrane. Its subcellular location is the early endosome. Proposed effector of Rab5. Binds to phosphatidylinositol 3-phosphate (PI(3)P). Involved in homotypic early endosome fusion and to a lesser extent in heterotypic fusion of chlathrin-coated vesicles with early endosomes. Involved in macropinocytosis; the function is dependent on Rab5-GTP. Required for correct endosomal localization. Involved in the internalization and trafficking of activated tyrosine kinase receptors such as PDGFRB. Regulates the subcellular localization of the retromer complex in a EHD1-dependent manner. Involved in endosome-to-Golgi transport and biosynthetic transport to late endosomes and lysosomes indicative for a regulation of retromer complex-mediated retrograde transport. This chain is Rabankyrin-5 (ANKFY1), found in Homo sapiens (Human).